The sequence spans 2754 residues: Neurobeachin-like protein 2 (2754 aa).

2 disordered regions span residues 1298-1338 and 1364-1438; these read TAGS…SEAP and SVGS…QQTS. Pro residues-rich tracts occupy residues 1301-1323 and 1388-1400; these read SPPP…PPTE and TPSP…PFPA. A compositionally biased stretch (polar residues) spans 1425-1437; the sequence is GDDTSNTSNPQQT. Ser-1647 carries the phosphoserine modification. Thr-1867 carries the phosphothreonine modification. One can recognise a BEACH-type PH domain in the interval 1915-2040; sequence EQREKLVLSA…VRNQVYSWLL (126 aa). One can recognise a BEACH domain in the interval 2053–2345; sequence RSPQEMLRAS…QLLKEPHPTR (293 aa). WD repeat units follow at residues 2386–2424, 2448–2491, 2494–2531, 2544–2582, 2589–2631, 2639–2674, and 2682–2717; these read LVLA…SWLP, RLLS…ALPR, LLSQ…VWRL, KPVQ…IHTV, AALR…TYSL, KLRA…ILQL, and PPLP…VVAG. Residues Ser-2739 and Ser-2742 each carry the phosphoserine modification.

This sequence belongs to the WD repeat neurobeachin family. As to expression, expressed in megakaryocytes.

The protein resides in the endoplasmic reticulum. In terms of biological role, probably involved in thrombopoiesis. Plays a role in the development or secretion of alpha-granules, that contain several growth factors important for platelet biogenesis. This chain is Neurobeachin-like protein 2 (NBEAL2), found in Homo sapiens (Human).